A 127-amino-acid polypeptide reads, in one-letter code: MLRTFMHAKLHKARVTEANLHYVGSITIDEDLLDAVGILENEKVQVTNNQNGARIETYAIKGARGSGVICLNGAAARHFQIGDEVIIMAYAQLTNEEIATHVPKVAVLDQENSIKQMLSQEIAHTIL.

S25 acts as the Schiff-base intermediate with substrate; via pyruvic acid in catalysis. A Pyruvic acid (Ser) modification is found at S25. T57 is a substrate binding site. The Proton donor role is filled by Y58. Residue 73-75 (GAA) coordinates substrate.

Belongs to the PanD family. In terms of assembly, heterooctamer of four alpha and four beta subunits. It depends on pyruvate as a cofactor. In terms of processing, is synthesized initially as an inactive proenzyme, which is activated by self-cleavage at a specific serine bond to produce a beta-subunit with a hydroxyl group at its C-terminus and an alpha-subunit with a pyruvoyl group at its N-terminus.

It localises to the cytoplasm. The catalysed reaction is L-aspartate + H(+) = beta-alanine + CO2. It functions in the pathway cofactor biosynthesis; (R)-pantothenate biosynthesis; beta-alanine from L-aspartate: step 1/1. Its function is as follows. Catalyzes the pyruvoyl-dependent decarboxylation of aspartate to produce beta-alanine. The protein is Aspartate 1-decarboxylase of Exiguobacterium sibiricum (strain DSM 17290 / CCUG 55495 / CIP 109462 / JCM 13490 / 255-15).